The chain runs to 120 residues: Large ribosomal subunit protein uL24 (120 aa).

Belongs to the universal ribosomal protein uL24 family. As to quaternary structure, part of the 50S ribosomal subunit.

In terms of biological role, one of two assembly initiator proteins, it binds directly to the 5'-end of the 23S rRNA, where it nucleates assembly of the 50S subunit. Located at the polypeptide exit tunnel on the outside of the subunit. The protein is Large ribosomal subunit protein uL24 of Methanocaldococcus jannaschii (strain ATCC 43067 / DSM 2661 / JAL-1 / JCM 10045 / NBRC 100440) (Methanococcus jannaschii).